A 460-amino-acid chain; its full sequence is Cysteine--tRNA ligase (460 aa).

Cys-28 serves as a coordination point for Zn(2+). Residues 30–40 carry the 'HIGH' region motif; that stretch reads MTVYDYCHLGH. 3 residues coordinate Zn(2+): Cys-209, His-234, and Glu-238. The short motif at 266–270 is the 'KMSKS' region element; that stretch reads KMSKS. Position 269 (Lys-269) interacts with ATP.

Belongs to the class-I aminoacyl-tRNA synthetase family. As to quaternary structure, monomer. It depends on Zn(2+) as a cofactor.

The protein localises to the cytoplasm. It catalyses the reaction tRNA(Cys) + L-cysteine + ATP = L-cysteinyl-tRNA(Cys) + AMP + diphosphate. This is Cysteine--tRNA ligase from Thioalkalivibrio sulfidiphilus (strain HL-EbGR7).